A 403-amino-acid polypeptide reads, in one-letter code: Argininosuccinate synthase (403 aa).

ATP contacts are provided by residues 12-20 and alanine 39; that span reads AYSGGLDTS. Residues tyrosine 90 and serine 95 each contribute to the L-citrulline site. Glycine 120 provides a ligand contact to ATP. Residues threonine 122, asparagine 126, and aspartate 127 each coordinate L-aspartate. Asparagine 126 provides a ligand contact to L-citrulline. Residues arginine 130, serine 182, serine 191, glutamate 267, and tyrosine 279 each coordinate L-citrulline.

It belongs to the argininosuccinate synthase family. Type 1 subfamily. As to quaternary structure, homotetramer.

The protein localises to the cytoplasm. The catalysed reaction is L-citrulline + L-aspartate + ATP = 2-(N(omega)-L-arginino)succinate + AMP + diphosphate + H(+). Its pathway is amino-acid biosynthesis; L-arginine biosynthesis; L-arginine from L-ornithine and carbamoyl phosphate: step 2/3. In Vesicomyosocius okutanii subsp. Calyptogena okutanii (strain HA), this protein is Argininosuccinate synthase.